The following is a 235-amino-acid chain: Small ribosomal subunit protein uS3 (235 aa).

In terms of domain architecture, KH type-2 spans 39-107 (IREILHKELK…DVVINIVEIR (69 aa)). Residues 215 to 235 (QDKRMAESDGGGSSRPRRDAA) form a disordered region.

It belongs to the universal ribosomal protein uS3 family. As to quaternary structure, part of the 30S ribosomal subunit. Forms a tight complex with proteins S10 and S14.

In terms of biological role, binds the lower part of the 30S subunit head. Binds mRNA in the 70S ribosome, positioning it for translation. The polypeptide is Small ribosomal subunit protein uS3 (Rhodopseudomonas palustris (strain TIE-1)).